A 451-amino-acid polypeptide reads, in one-letter code: UPF0210 protein lmo0534 (451 aa).

This sequence belongs to the UPF0210 family. In terms of assembly, homodimer.

The sequence is that of UPF0210 protein lmo0534 from Listeria monocytogenes serovar 1/2a (strain ATCC BAA-679 / EGD-e).